The chain runs to 810 residues: Nuclear pore complex protein NUP88 (810 aa).

Residues 1–23 (MKFNFNETEDAPDSRRSPTPKEP) are disordered. A coiled-coil region spans residues 646–748 (APNLKRIIDD…RARVKKSTQK (103 aa)).

As to quaternary structure, part of the nuclear pore complex (NPC). The NPC has an eight-fold symmetrical structure comprising a central transport channel and two rings, the cytoplasmic and nuclear rings, to which eight filaments are attached. The cytoplasmic filaments have loose ends, while the nuclear filaments are joined in a distal ring, forming a nuclear basket. NPCs are highly dynamic in configuration and composition, and can be devided in 3 subcomplexes, the NUP62 subcomplex, the NUP107-160 subcomplex and the NUP93 subcomplex, containing approximately 30 different nucleoporin proteins.

It is found in the nucleus envelope. The protein resides in the nucleus. It localises to the nuclear pore complex. Involved in the regulation of exportin-mediated nuclear protein export. Required for resistance mediated by multiple R proteins and for the appropriate nuclear accumulation of SNC1 and of the downstream defense signaling components EDS1 and NPR1. Not involved in salt tolerance, ethylene and auxin responses, but required for systemic acquired resistance. This Arabidopsis thaliana (Mouse-ear cress) protein is Nuclear pore complex protein NUP88.